The chain runs to 125 residues: Fluoride-specific ion channel FluC (125 aa).

4 helical membrane passes run 6-26 (AWIA…SGLV), 36-56 (WGTW…WALA), 68-88 (FIVL…AFEA), and 97-117 (WLLA…CVFL). Residues Gly-76 and Thr-79 each contribute to the Na(+) site.

Belongs to the fluoride channel Fluc/FEX (TC 1.A.43) family.

Its subcellular location is the cell inner membrane. It catalyses the reaction fluoride(in) = fluoride(out). Its activity is regulated as follows. Na(+) is not transported, but it plays an essential structural role and its presence is essential for fluoride channel function. Fluoride-specific ion channel. Important for reducing fluoride concentration in the cell, thus reducing its toxicity. This chain is Fluoride-specific ion channel FluC, found in Nitrosococcus oceani (strain ATCC 19707 / BCRC 17464 / JCM 30415 / NCIMB 11848 / C-107).